The primary structure comprises 393 residues: S-adenosylmethionine synthase 2 (393 aa).

Glu-9 contacts Mg(2+). His-15 provides a ligand contact to ATP. Glu-43 contacts K(+). Positions 56 and 99 each coordinate L-methionine. Residues 167–169 (DGK), 235–238 (SGRF), Asp-246, 252–253 (RK), Ala-269, Lys-273, and Lys-277 each bind ATP. Asp-246 is a binding site for L-methionine. Lys-277 contributes to the L-methionine binding site.

This sequence belongs to the AdoMet synthase family. As to quaternary structure, homotetramer. The cofactor is Mn(2+). Mg(2+) serves as cofactor. Co(2+) is required as a cofactor. It depends on K(+) as a cofactor.

It localises to the cytoplasm. It catalyses the reaction L-methionine + ATP + H2O = S-adenosyl-L-methionine + phosphate + diphosphate. The protein operates within amino-acid biosynthesis; S-adenosyl-L-methionine biosynthesis; S-adenosyl-L-methionine from L-methionine: step 1/1. In terms of biological role, catalyzes the formation of S-adenosylmethionine from methionine and ATP. The reaction comprises two steps that are both catalyzed by the same enzyme: formation of S-adenosylmethionine (AdoMet) and triphosphate, and subsequent hydrolysis of the triphosphate. May be involved in the synthesis of betain in response to abiotic stress such as high salinity. The chain is S-adenosylmethionine synthase 2 (SAMS2) from Beta vulgaris (Sugar beet).